A 446-amino-acid chain; its full sequence is Phosphoglucosamine mutase (446 aa).

Catalysis depends on Ser-101, which acts as the Phosphoserine intermediate. Positions 101, 240, 242, and 244 each coordinate Mg(2+). The residue at position 101 (Ser-101) is a Phosphoserine.

Belongs to the phosphohexose mutase family. Mg(2+) is required as a cofactor. Activated by phosphorylation.

The enzyme catalyses alpha-D-glucosamine 1-phosphate = D-glucosamine 6-phosphate. Catalyzes the conversion of glucosamine-6-phosphate to glucosamine-1-phosphate. The sequence is that of Phosphoglucosamine mutase from Coxiella burnetii (strain RSA 331 / Henzerling II).